The chain runs to 330 residues: ADP-L-glycero-D-manno-heptose-6-epimerase (330 aa).

NADP(+)-binding positions include 11 to 12 (FI), 32 to 33 (DN), K39, K54, 75 to 79 (EGACS), and N92. Y139 functions as the Proton acceptor in the catalytic mechanism. K143 serves as a coordination point for NADP(+). Position 168 (N168) interacts with substrate. Residues V169 and K177 each coordinate NADP(+). K177 serves as the catalytic Proton acceptor. Substrate contacts are provided by residues R179, H186, 200–203 (FGEY), R213, and Y292.

This sequence belongs to the NAD(P)-dependent epimerase/dehydratase family. HldD subfamily. As to quaternary structure, homopentamer. NADP(+) is required as a cofactor.

The catalysed reaction is ADP-D-glycero-beta-D-manno-heptose = ADP-L-glycero-beta-D-manno-heptose. The protein operates within nucleotide-sugar biosynthesis; ADP-L-glycero-beta-D-manno-heptose biosynthesis; ADP-L-glycero-beta-D-manno-heptose from D-glycero-beta-D-manno-heptose 7-phosphate: step 4/4. Its function is as follows. Catalyzes the interconversion between ADP-D-glycero-beta-D-manno-heptose and ADP-L-glycero-beta-D-manno-heptose via an epimerization at carbon 6 of the heptose. The chain is ADP-L-glycero-D-manno-heptose-6-epimerase from Burkholderia ambifaria (strain ATCC BAA-244 / DSM 16087 / CCUG 44356 / LMG 19182 / AMMD) (Burkholderia cepacia (strain AMMD)).